We begin with the raw amino-acid sequence, 291 residues long: Small ribosomal subunit protein uS2 (291 aa).

The interval 254–291 is disordered; it reads RTSNRDNKNNKNNNNTDNTDNAASIKEEDLIGGSNNEN. The segment covering 263-277 has biased composition (low complexity); it reads NKNNNNTDNTDNAAS.

The protein belongs to the universal ribosomal protein uS2 family.

This is Small ribosomal subunit protein uS2 from Ehrlichia canis (strain Jake).